The following is a 139-amino-acid chain: uncharacterized protein (139 aa).

This sequence to E.coli YebE.

This is an uncharacterized protein from Yersinia enterocolitica.